A 148-amino-acid chain; its full sequence is Small ribosomal subunit protein eS19G (148 aa).

It belongs to the eukaryotic ribosomal protein eS19 family.

In terms of biological role, elimination of the ALEP-1 gene from all somatic cells in its fully activate state may represent an alternative way to gene regulation. This chain is Small ribosomal subunit protein eS19G (RPS19G), found in Ascaris suum (Pig roundworm).